The sequence spans 134 residues: MWSDPIADMLTRIRNANVALKEQVDVPASNLKKEIAEILKREGFIKDYTYIEDGKQGIIRIHMKYKGTRRNRERVIHGIVRVSKPGRRIYVGKDNLPKVKNGLGIAILTTSKGVLTDKQAREIGVGGEVIAYIW.

Belongs to the universal ribosomal protein uS8 family. In terms of assembly, part of the 30S ribosomal subunit. Contacts proteins S5 and S12.

In terms of biological role, one of the primary rRNA binding proteins, it binds directly to 16S rRNA central domain where it helps coordinate assembly of the platform of the 30S subunit. The polypeptide is Small ribosomal subunit protein uS8 (Thermosipho africanus (strain TCF52B)).